Here is a 797-residue protein sequence, read N- to C-terminus: Phenylalanine--tRNA ligase beta subunit (797 aa).

Residues 40–154 (MEGLSKLVVG…ADAKVGDSIF (115 aa)) enclose the tRNA-binding domain. The region spanning 407-482 (PILPKVSITL…RIYGYDNLPS (76 aa)) is the B5 domain. Mg(2+)-binding residues include Asp460, Asp466, Glu469, and Glu470. Positions 704-797 (PKVQAVHRDI…LVEKLDIEIR (94 aa)) constitute an FDX-ACB domain.

This sequence belongs to the phenylalanyl-tRNA synthetase beta subunit family. Type 1 subfamily. In terms of assembly, tetramer of two alpha and two beta subunits. The cofactor is Mg(2+).

It is found in the cytoplasm. It catalyses the reaction tRNA(Phe) + L-phenylalanine + ATP = L-phenylalanyl-tRNA(Phe) + AMP + diphosphate + H(+). This Lactococcus lactis subsp. lactis (strain IL1403) (Streptococcus lactis) protein is Phenylalanine--tRNA ligase beta subunit.